The primary structure comprises 281 residues: Probable endonuclease 4 (281 aa).

Histidine 69, histidine 109, glutamate 145, aspartate 179, histidine 182, histidine 216, aspartate 229, histidine 231, and glutamate 261 together coordinate Zn(2+).

Belongs to the AP endonuclease 2 family. Zn(2+) serves as cofactor.

The enzyme catalyses Endonucleolytic cleavage to 5'-phosphooligonucleotide end-products.. Its function is as follows. Endonuclease IV plays a role in DNA repair. It cleaves phosphodiester bonds at apurinic or apyrimidinic (AP) sites, generating a 3'-hydroxyl group and a 5'-terminal sugar phosphate. The chain is Probable endonuclease 4 from Parabacteroides distasonis (strain ATCC 8503 / DSM 20701 / CIP 104284 / JCM 5825 / NCTC 11152).